The following is a 279-amino-acid chain: Bifunctional protein FolD (279 aa).

Residues 159–161 (GRS), serine 184, and threonine 225 contribute to the NADP(+) site.

The protein belongs to the tetrahydrofolate dehydrogenase/cyclohydrolase family. In terms of assembly, homodimer.

It catalyses the reaction (6R)-5,10-methylene-5,6,7,8-tetrahydrofolate + NADP(+) = (6R)-5,10-methenyltetrahydrofolate + NADPH. It carries out the reaction (6R)-5,10-methenyltetrahydrofolate + H2O = (6R)-10-formyltetrahydrofolate + H(+). It participates in one-carbon metabolism; tetrahydrofolate interconversion. Its function is as follows. Catalyzes the oxidation of 5,10-methylenetetrahydrofolate to 5,10-methenyltetrahydrofolate and then the hydrolysis of 5,10-methenyltetrahydrofolate to 10-formyltetrahydrofolate. This chain is Bifunctional protein FolD, found in Methanospirillum hungatei JF-1 (strain ATCC 27890 / DSM 864 / NBRC 100397 / JF-1).